The chain runs to 175 residues: MGTVNVVNVAKKHQFSWYEKFYFWSIGKGLWITLKHFVKVAFFNKQVTIEYPDKKRQYSTRFRGMHSMKRDEQGRERCTACFCCMWICPANAIHIEAAEVTAERQHLHPEDKYAKKFEINLLRCIFCGLCEEACPKGAIYLDGTGEMAADNREDLFLTKERMMEKTGGPILGQRN.

4Fe-4S ferredoxin-type domains follow at residues 69–98 and 115–144; these read KRDEQGRERCTACFCCMWICPANAIHIEAA and KKFEINLLRCIFCGLCEEACPKGAIYLDGT. [4Fe-4S] cluster contacts are provided by Cys78, Cys81, Cys84, Cys88, Cys124, Cys127, Cys130, and Cys134.

The protein belongs to the complex I 23 kDa subunit family. In terms of assembly, NDH-1 is composed of 14 different subunits. Subunits NuoA, H, J, K, L, M, N constitute the membrane sector of the complex. [4Fe-4S] cluster is required as a cofactor.

It is found in the cell inner membrane. The enzyme catalyses a quinone + NADH + 5 H(+)(in) = a quinol + NAD(+) + 4 H(+)(out). Functionally, NDH-1 shuttles electrons from NADH, via FMN and iron-sulfur (Fe-S) centers, to quinones in the respiratory chain. The immediate electron acceptor for the enzyme in this species is believed to be ubiquinone. Couples the redox reaction to proton translocation (for every two electrons transferred, four hydrogen ions are translocated across the cytoplasmic membrane), and thus conserves the redox energy in a proton gradient. The sequence is that of NADH-quinone oxidoreductase subunit I from Leptospira biflexa serovar Patoc (strain Patoc 1 / Ames).